The sequence spans 1115 residues: MATMSGTTIVCLIYLTTMLGNSQGVNLKIESPSPPTLCSVEGTFHCDDGMLQCVLMGSKCDGVSDCENGMDESVETCGCLQSEFQCNHTTCIDKILRCDRNDDCSNGLDERECDIYICPLGTHVKWHNHFCVPRDKQCDFLDDCGDNSDEKICERRECVATEFKCNNSQCVAFGNLCDGLVDCVDGSDEDQVACDSDKYFQCAEGSLIKKEFVCDGWVDCKLTFADELNCKLCDEDDFRCSDTRCIQKSNVCDGYCDCKTCDDEEVCANNTYGCPMDTKYMCRSIYGEPRCIDKDNVCNMINDCRDGNVGTDEYYCSNDSECKNFQAAMGFFYCPEERCLAKHLYCDLHPDCINGEDEQSCLAPPKCSQDEFQCHHGKCIPISKRCDSVHDCVDWSDEMNCENHQCAANMKSCLSGHCIEEHKWCNFHRECPDGSDEKDCDPRPVCEANQFRCKNGQCIDPLQVCVKGDKYDGCADQSHLINCSQHICLEGQFRCRKSFCINQTKVCDGTVDCLQGMWDENNCRYWCPHGQAICQCEGVTMDCTGQKLKEMPVQQMEEDLSKLMIGDNLLNLTSTTFSATYYDKVTYLDLSRNHLTEIPIYSFQNMWKLTHLNLADNNITSLKNGSLLGLSNLKQLHINGNKIETIEEDTFSSMIHLTVLDLSNQRLTHVYKNMFKGLKQITVLNISRNQINSIDNGAFNNLANVRLIDLSGNVIKDIGQKVFMGLPRLVELKTDSYRFCCLAPEGVKCSPKQDEFSSCEDLMSNHVLRVSIWVLGVIALVGNFVVIFWRVRDFRGGKVHSFLITNLAIGDFLMGVYLLIIATADTYYRGVYISHDENWKQSGLCQFAGFVSTFSSELSVLTLSTITLDRLICILFPLRRTRLGLRQAIIVMSCIWVLVFLLAVLPLLGFSYFENFYGRSGVCLALHVTPDRRPGWEYSVGVFILLNLLSFVLIASSYLWMFSVAKKTRSAVRTAESKNDNAMARRMTLIVMTDFCCWVPIIVLGFVSLAGARADDQVYAWIAVFVLPLNSATNPVIYTLSTAPFLGNVRKRANRFRKSFIHSFTGDTKHSYVDDGTTHSYCEKKSPYRQLELKRLRSLNSSPPMYYNTELHSDS.

The signal sequence occupies residues 1-24 (MATMSGTTIVCLIYLTTMLGNSQG). Residues 25–767 (VNLKIESPSP…SCEDLMSNHV (743 aa)) lie on the Extracellular side of the membrane. LDL-receptor class A domains follow at residues 36-79 (TLCS…TCGC), 77-115 (CGCL…ECDI), 116-155 (YICP…ICER), 156-196 (RECV…ACDS), 195-232 (DSDK…NCKL), 231-269 (KLCD…VCAN), 272-318 (YGCP…YCSN), 320-363 (SECK…SCLA), 365-403 (PKCS…NCEN), 404-442 (HQCA…DCDP), 444-485 (PVCE…NCSQ), and 486-525 (HICL…NCRY). 16 disulfide bridges follow: Cys38–Cys53, Cys46–Cys66, Cys60–Cys77, Cys79–Cys91, Cys86–Cys104, Cys98–Cys113, Cys118–Cys131, Cys138–Cys153, Cys158–Cys170, Cys165–Cys183, Cys177–Cys194, Cys202–Cys220, Cys214–Cys230, Cys233–Cys245, Cys240–Cys258, and Cys252–Cys267. An N-linked (GlcNAc...) asparagine glycan is attached at Asn87. Residue Asn166 is glycosylated (N-linked (GlcNAc...) asparagine). Asn269 is a glycosylation site (N-linked (GlcNAc...) asparagine). 3 disulfides stabilise this stretch: Cys274/Cys291, Cys282/Cys304, and Cys298/Cys316. The N-linked (GlcNAc...) asparagine glycan is linked to Asn318. Cystine bridges form between Cys322/Cys339, Cys334/Cys352, Cys346/Cys361, Cys367/Cys379, Cys374/Cys392, Cys386/Cys401, Cys406/Cys418, Cys413/Cys431, Cys425/Cys440, Cys446/Cys458, Cys453/Cys474, Cys465/Cys483, Cys488/Cys500, Cys495/Cys513, and Cys507/Cys523. Asn482 is a glycosylation site (N-linked (GlcNAc...) asparagine). Asn502 carries N-linked (GlcNAc...) asparagine glycosylation. Residues 518–562 (WDENNCRYWCPHGQAICQCEGVTMDCTGQKLKEMPVQQMEEDLSK) form the LRRNT domain. An N-linked (GlcNAc...) asparagine glycan is attached at Asn571. LRR repeat units lie at residues 584–605 (KVTY…SFQN), 608–629 (KLTH…SLLG), 632–653 (NLKQ…TFSS), 656–677 (HLTV…MFKG), 680–701 (QITV…AFNN), and 704–725 (NVRL…VFMG). Residues Asn618 and Asn624 are each glycosylated (N-linked (GlcNAc...) asparagine). Asn685 carries N-linked (GlcNAc...) asparagine glycosylation. Residues 768-788 (LRVSIWVLGVIALVGNFVVIF) traverse the membrane as a helical segment. Topologically, residues 789–801 (WRVRDFRGGKVHS) are cytoplasmic. Residues 802–822 (FLITNLAIGDFLMGVYLLIIA) traverse the membrane as a helical segment. The Extracellular segment spans residues 823 to 857 (TADTYYRGVYISHDENWKQSGLCQFAGFVSTFSSE). Residues 858–878 (LSVLTLSTITLDRLICILFPL) traverse the membrane as a helical segment. The Cytoplasmic segment spans residues 879–887 (RRTRLGLRQ). The helical transmembrane segment at 888–908 (AIIVMSCIWVLVFLLAVLPLL) threads the bilayer. Residues 909–941 (GFSYFENFYGRSGVCLALHVTPDRRPGWEYSVG) lie on the Extracellular side of the membrane. The chain crosses the membrane as a helical span at residues 942-962 (VFILLNLLSFVLIASSYLWMF). At 963-988 (SVAKKTRSAVRTAESKNDNAMARRMT) the chain is on the cytoplasmic side. A helical transmembrane segment spans residues 989-1009 (LIVMTDFCCWVPIIVLGFVSL). The Extracellular portion of the chain corresponds to 1010-1017 (AGARADDQ). Residues 1018–1038 (VYAWIAVFVLPLNSATNPVIY) traverse the membrane as a helical segment. Over 1039-1115 (TLSTAPFLGN…YYNTELHSDS (77 aa)) the chain is Cytoplasmic.

Belongs to the G-protein coupled receptor 1 family. In terms of tissue distribution, predominantly expressed in a small number of neurons within the central nervous system and to a lesser extent in the heart.

It is found in the cell membrane. Might directly transduce signals carried by large extracellular lipoprotein complexes into neuronal events. The chain is G-protein coupled receptor GRL101 from Lymnaea stagnalis (Great pond snail).